A 664-amino-acid chain; its full sequence is Degenerin del-1 (664 aa).

The Cytoplasmic portion of the chain corresponds to 1–67 (MARKYIDILK…IFTTSLYWVR (67 aa)). The helical transmembrane segment at 68–88 (FLWVVVSLVCICLCMYSFSHV) threads the bilayer. Residues 89–607 (KDKYDRKEKI…WFNLMADMGG (519 aa)) are Extracellular-facing. 5 N-linked (GlcNAc...) asparagine glycosylation sites follow: Asn241, Asn300, Asn394, Asn508, and Asn562. A helical membrane pass occupies residues 608–628 (QAGLFLGASIMSVIEFLFFAV). Topologically, residues 629–664 (RTLGIACKPRRWRQKTELLRAEELNDAEKGVSTNNN) are cytoplasmic.

The protein belongs to the amiloride-sensitive sodium channel (TC 1.A.6) family.

The protein localises to the membrane. Probable sodium channel subunit. The protein is Degenerin del-1 (del-1) of Caenorhabditis elegans.